The following is a 505-amino-acid chain: Lysine--tRNA ligase (505 aa).

Residues Glu415 and Glu422 each coordinate Mg(2+).

Belongs to the class-II aminoacyl-tRNA synthetase family. In terms of assembly, homodimer. Mg(2+) serves as cofactor.

It localises to the cytoplasm. It carries out the reaction tRNA(Lys) + L-lysine + ATP = L-lysyl-tRNA(Lys) + AMP + diphosphate. This chain is Lysine--tRNA ligase, found in Shigella dysenteriae serotype 1 (strain Sd197).